We begin with the raw amino-acid sequence, 508 residues long: Aldehyde dehydrogenase family 7 member A1 (508 aa).

244-249 is an NAD(+) binding site; it reads GSSKVG. Catalysis depends on glutamate 266, which acts as the Proton acceptor. Cysteine 300 functions as the Nucleophile in the catalytic mechanism.

Belongs to the aldehyde dehydrogenase family. In terms of assembly, homotetramer.

The catalysed reaction is an aldehyde + NAD(+) + H2O = a carboxylate + NADH + 2 H(+). The chain is Aldehyde dehydrogenase family 7 member A1 from Pisum sativum (Garden pea).